The following is a 428-amino-acid chain: Probable anion transporter 6 (428 aa).

The first 22 residues, 1–22 (MKFPKRYAIVLLTFMCTNVCYI), serve as a signal peptide directing secretion. A run of 11 helical transmembrane segments spans residues 47-67 (MILSMFYYGYVLSQIPGGWAA), 74-94 (LVLLLSFVLWSSICAVVPLDP), 98-118 (ILLVLSRLLVGVAQGLIFPSI), 137-157 (LTTSGMYLGAACGMLLLPSLV), 164-184 (SVFSVEAMLGVAWLLIWFKFA), 221-241 (ILFSLPIWAIVVNNFTFHYAL), 269-289 (LPYLNMFLFSNIGGVLADHLI), 301-321 (KLLNTVGFVVSAIALMALPLF), 327-347 (AIFCSSVSLGFLALGRAGFAV), 356-376 (FAGIVMGISNTAGTLAGIVGV), and 401-421 (TVFFVPGYLCIFSSFIFLIFS).

This sequence belongs to the major facilitator superfamily. Sodium/anion cotransporter (TC 2.A.1.14) family.

The protein resides in the cell membrane. In terms of biological role, probable anion transporter. The sequence is that of Probable anion transporter 6 (PHT4;6) from Oryza sativa subsp. japonica (Rice).